The sequence spans 213 residues: Large ribosomal subunit protein uL1 (213 aa).

It belongs to the universal ribosomal protein uL1 family. In terms of assembly, part of the 50S ribosomal subunit.

In terms of biological role, binds directly to 23S rRNA. Probably involved in E site tRNA release. Functionally, protein L1 is also a translational repressor protein, it controls the translation of its operon by binding to its mRNA. The polypeptide is Large ribosomal subunit protein uL1 (Methanosarcina acetivorans (strain ATCC 35395 / DSM 2834 / JCM 12185 / C2A)).